A 202-amino-acid polypeptide reads, in one-letter code: Hypoxanthine-guanine phosphoribosyltransferase (202 aa).

K66 and G67 together coordinate diphosphate. Positions 122 and 123 each coordinate Mg(2+). The Proton acceptor role is filled by D126. GMP-binding positions include K154, 175–176, and D182; that span reads FV. Position 188 (R188) interacts with diphosphate.

This sequence belongs to the purine/pyrimidine phosphoribosyltransferase family. In terms of assembly, homodimer and homotetramer in equilibrium. The presence or absence of divalent metal ions, as well as phosphate, can affect the oligomerization state of the enzyme. Likely functions as a tetramer (rather than a dimer) in its biological environment, which is the most active form. The dimeric structure is also active though ~50% of that of the tetramer. The cofactor is Mg(2+).

Its subcellular location is the cytoplasm. It catalyses the reaction IMP + diphosphate = hypoxanthine + 5-phospho-alpha-D-ribose 1-diphosphate. It carries out the reaction GMP + diphosphate = guanine + 5-phospho-alpha-D-ribose 1-diphosphate. It functions in the pathway purine metabolism; IMP biosynthesis via salvage pathway; IMP from hypoxanthine: step 1/1. The protein operates within purine metabolism; GMP biosynthesis via salvage pathway; GMP from guanine: step 1/1. Competitively inhibited by acyclic nucleoside phosphonates (ANPs) with Ki values as low as 0.69 uM. Prodrugs of these compounds arrest the growth of a virulent strain of M.tuberculosis with MIC50 values as low as 4.5 uM and possess low cytotoxicity in mammalian cells. Inhibited by pyrrolidine nucleoside bisphosphonates, which are also able to arrest the growth of virulent M.tuberculosis not only in its replicating phase but also in its latent phase, and to arrest the growth of M.tuberculosis in infected macrophages while having low cytotoxicity in mammalian cells. Functionally, purine salvage pathway enzyme that catalyzes the transfer of the ribosyl-5-phosphate group from 5-phospho-alpha-D-ribose 1-diphosphate (PRPP) to the N9 position of the 6-oxopurines hypoxanthine and guanine to form the corresponding ribonucleotides IMP (inosine 5'-monophosphate) and GMP (guanosine 5'-monophosphate), with the release of PPi. Thus, specifically recycles hypoxanthine and guanine imported from the external medium, and converts them to IMP and GMP, respectively. Cannot use xanthine as substrate. The chain is Hypoxanthine-guanine phosphoribosyltransferase from Mycobacterium tuberculosis (strain ATCC 25618 / H37Rv).